The sequence spans 138 residues: Large ribosomal subunit protein uL16 (138 aa).

The segment covering 1–13 has biased composition (basic residues); it reads MLQPARRKYRKEQ. Residues 1 to 22 form a disordered region; the sequence is MLQPARRKYRKEQKGRNTGVAT.

The protein belongs to the universal ribosomal protein uL16 family. As to quaternary structure, part of the 50S ribosomal subunit.

In terms of biological role, binds 23S rRNA and is also seen to make contacts with the A and possibly P site tRNAs. This is Large ribosomal subunit protein uL16 from Polaromonas sp. (strain JS666 / ATCC BAA-500).